Reading from the N-terminus, the 271-residue chain is N-acylmannosamine 1-dehydrogenase (271 aa).

NAD(+) is bound at residue 20–44; that stretch reads VTGAAGGIGRATVEAYLREGASVVA. Ser-153 contributes to the substrate binding site. The active-site Proton acceptor is Tyr-166.

This sequence belongs to the short-chain dehydrogenases/reductases (SDR) family.

The enzyme catalyses an N-acyl-D-mannosamine + NAD(+) = an N-acyl-D-mannosaminolactone + NADH + H(+). Its function is as follows. Acts on acetyl-D-mannosamine and glycolyl-D-mannosamine. This chain is N-acylmannosamine 1-dehydrogenase, found in Flavobacterium sp. (strain 141-8).